The chain runs to 615 residues: Delta-like protein B (615 aa).

Positions 1–20 are cleaved as a signal peptide; it reads MAHLSLYCLLSVSLLQLVAS. Topologically, residues 21-522 are extracellular; sequence SGVFELKVHS…VGQTSPSAVA (502 aa). Residues 159-203 form the DSL domain; it reads VFCDEFYFGEACSDYCRPRDDTLGHYTCDENGNKECLVGWQGDYC. Cystine bridges form between cysteine 161–cysteine 170, cysteine 174–cysteine 186, cysteine 194–cysteine 203, cysteine 208–cysteine 219, cysteine 212–cysteine 225, cysteine 227–cysteine 236, cysteine 245–cysteine 250, cysteine 258–cysteine 267, cysteine 274–cysteine 286, cysteine 280–cysteine 296, cysteine 298–cysteine 307, cysteine 314–cysteine 325, cysteine 319–cysteine 334, cysteine 336–cysteine 345, cysteine 352–cysteine 363, cysteine 357–cysteine 373, cysteine 375–cysteine 384, cysteine 391–cysteine 402, cysteine 396–cysteine 411, cysteine 413–cysteine 422, cysteine 429–cysteine 440, cysteine 434–cysteine 449, cysteine 451–cysteine 460, cysteine 467–cysteine 478, cysteine 472–cysteine 487, and cysteine 489–cysteine 498. 3 consecutive EGF-like domains span residues 204–237, 241–268, and 270–308; these read SDPI…PSCS, HYPG…LFCN, and DLNY…TNCE. The EGF-like 4; calcium-binding domain maps to 310–346; that stretch reads EINECDCNPCKNGGSCNDLENDYSCTCPQGFYGKNCE. EGF-like domains follow at residues 348–385 and 387–423; these read IAMT…SNCE and RLDR…SRCE. The region spanning 425–461 is the EGF-like 7; calcium-binding domain; sequence NIDDCARYPCQNAGTCQDGINDYTCTCTLGFTGKNCS. Asparagine 459 carries an N-linked (GlcNAc...) asparagine glycan. Residues 463–499 form the EGF-like 8 domain; sequence RADACLTNPCLHGGTCFTHFSGPVCQCVPGFMGSTCE. A helical membrane pass occupies residues 523-543; sequence VSCVLGVLAVFLGVCVGLVVL. The Cytoplasmic portion of the chain corresponds to 544–615; the sequence is RRRRHRLRRQ…FLWSAGGGLR (72 aa).

Post-translationally, ubiquitinated by mib, leading to its endocytosis and subsequent degradation.

The protein localises to the membrane. Its function is as follows. Acts as a ligand for Notch receptors and is involved in primary neurogenesis. Can activate Notch receptors, thereby playing a key role in lateral inhibition, a process that prevents the immediate neighbors of each nascent neural cell from simultaneously embarking on neural differentiation. The protein is Delta-like protein B (dlb) of Danio rerio (Zebrafish).